We begin with the raw amino-acid sequence, 371 residues long: Cytochrome b (371 aa).

A run of 4 helical transmembrane segments spans residues 25–45 (FGSM…FLAV), 69–90 (WMMQ…YIHI), 105–125 (WLSG…GYVL), and 170–190 (FFAL…LHIM). Histidine 75 and histidine 89 together coordinate heme b. Heme b contacts are provided by histidine 174 and histidine 188. Histidine 193 is an a ubiquinone binding site. 4 consecutive transmembrane segments (helical) span residues 218 to 238 (YKDL…VSFL), 280 to 300 (LWGA…PFTH), 312 to 332 (IMQL…WAAT), and 339 to 358 (FTMI…IMNP).

The protein belongs to the cytochrome b family. As to quaternary structure, the cytochrome bc1 complex contains 3 respiratory subunits (MT-CYB, CYC1 and UQCRFS1), 2 core proteins (UQCRC1 and UQCRC2) and probably 6 low-molecular weight proteins. Heme b is required as a cofactor.

Its subcellular location is the mitochondrion inner membrane. Functionally, component of the ubiquinol-cytochrome c reductase complex (complex III or cytochrome b-c1 complex) that is part of the mitochondrial respiratory chain. The b-c1 complex mediates electron transfer from ubiquinol to cytochrome c. Contributes to the generation of a proton gradient across the mitochondrial membrane that is then used for ATP synthesis. The chain is Cytochrome b (MT-CYB) from Eryx miliaris nogaiorum (Black sand boa).